The primary structure comprises 64 residues: Large ribosomal subunit protein bL35 (64 aa).

The span at 1 to 10 (MPKMKTNSAA) shows a compositional bias: polar residues. The segment at 1-64 (MPKMKTNSAA…AKKLHQLLQK (64 aa)) is disordered. A compositionally biased stretch (basic residues) spans 54-64 (QAKKLHQLLQK).

Belongs to the bacterial ribosomal protein bL35 family.

The polypeptide is Large ribosomal subunit protein bL35 (Bifidobacterium longum (strain NCC 2705)).